A 204-amino-acid polypeptide reads, in one-letter code: Protein DESIGUAL 4 (204 aa).

Helical transmembrane passes span 13-33, 60-80, 107-127, and 143-163; these read IITV…VAGF, FVLG…ANVI, CLFL…NGIW, and VFSI…IYYI. Residues 177–204 form a disordered region; that stretch reads KPNKTKPSELKPIPTEPNEAEPNSTPNP. The N-linked (GlcNAc...) asparagine glycan is linked to asparagine 179.

Belongs to the DESIGUAL family. Only expressed in inflorescences.

Its subcellular location is the endoplasmic reticulum membrane. The polypeptide is Protein DESIGUAL 4 (Arabidopsis thaliana (Mouse-ear cress)).